Consider the following 419-residue polypeptide: Delta(8)-fatty-acid desaturase (419 aa).

Residues 1–64 enclose the Cytochrome b5 heme-binding domain; it reads MKSKRQALSP…LKRMPKINPS (64 aa). Positions 24 and 47 each coordinate heme. Residues 110-130 traverse the membrane as a helical segment; it reads LGVLGYFLMVQYQMYFIGAVL. The Histidine box-1 motif lies at 143–147; it reads HDICH. Residues 156–176 form a helical membrane-spanning segment; it reads WNNLVGLVFGNGLQGFSVTCW. A Histidine box-2 motif is present at residues 180–184; sequence HNAHH. 3 consecutive transmembrane segments (helical) span residues 226-246, 266-286, and 290-310; these read YFLVICILLRFIWCFQCVLTV, IGLALHWTLKALFHLFFMPSI, and LLVFFVSELVGGFGIAIVVFM. Residues 355 to 359 carry the Histidine box-3 motif; that stretch reads QIEHH.

This sequence belongs to the fatty acid desaturase type 1 family. Fe cation serves as cofactor.

It localises to the membrane. The enzyme catalyses an (11Z,14Z)-icosadienoyl-containing glycerolipid + 2 Fe(II)-[cytochrome b5] + O2 + 2 H(+) = an (8Z,11Z,14Z)-icosatrienoyl-containing glycerolipid + 2 Fe(III)-[cytochrome b5] + 2 H2O. The catalysed reaction is an (11Z,14Z,17Z)-icosatrienoyl-containing glycerolipid + 2 Fe(II)-[cytochrome b5] + O2 + 2 H(+) = an (8Z,11Z,14Z,17Z)-eicosatetraenoyl-containing glycerolipid + 2 Fe(III)-[cytochrome b5] + 2 H2O. It catalyses the reaction an (11Z)-eicosenoyl-containing glycerolipid + 2 Fe(II)-[cytochrome b5] + O2 + 2 H(+) = a (8Z,11Z)-eicosadienoyl-containing glycerolipid + 2 Fe(III)-[cytochrome b5] + 2 H2O. It functions in the pathway lipid metabolism; fatty acid metabolism. In terms of biological role, delta(8)-fatty-acid desaturase which introduces a double bond at the 8-position in 20-carbon chain length fatty acids (C20) that have an existing delta-11 unsaturation (double bond). Whether it acts on CoA-linked substrates (as in animals) or phospholipid-linked substrates (as in plants and fungi) is still not clear. The protein is Delta(8)-fatty-acid desaturase (efd1) of Euglena gracilis.